Here is a 156-residue protein sequence, read N- to C-terminus: ATP synthase subunit b (156 aa).

A helical transmembrane segment spans residues 7–27 (LIGQLIAFAIFVWFCMKYVWP).

It belongs to the ATPase B chain family. In terms of assembly, F-type ATPases have 2 components, F(1) - the catalytic core - and F(0) - the membrane proton channel. F(1) has five subunits: alpha(3), beta(3), gamma(1), delta(1), epsilon(1). F(0) has three main subunits: a(1), b(2) and c(10-14). The alpha and beta chains form an alternating ring which encloses part of the gamma chain. F(1) is attached to F(0) by a central stalk formed by the gamma and epsilon chains, while a peripheral stalk is formed by the delta and b chains.

Its subcellular location is the cell inner membrane. Functionally, f(1)F(0) ATP synthase produces ATP from ADP in the presence of a proton or sodium gradient. F-type ATPases consist of two structural domains, F(1) containing the extramembraneous catalytic core and F(0) containing the membrane proton channel, linked together by a central stalk and a peripheral stalk. During catalysis, ATP synthesis in the catalytic domain of F(1) is coupled via a rotary mechanism of the central stalk subunits to proton translocation. Component of the F(0) channel, it forms part of the peripheral stalk, linking F(1) to F(0). The chain is ATP synthase subunit b from Histophilus somni (strain 129Pt) (Haemophilus somnus).